We begin with the raw amino-acid sequence, 300 residues long: MNGILNINKPPGLTSFGVVSKVRHIYSQKKVGHGGMLDPSATGVIPVFLGSATRLIEYLSSVRKTYLAEIELGTETDSYDSEGEITSRKSCEHITADMVRNALPDFLGEITQIPPMYSAVKHRGVRLYNLARQGIEVERNPRKAAIYGIEFLGFASPVLRLRIECGHGTYIRSIAFDLGRKLGCGAYLKTLVRESYGPFHLTTSLDLADLEAAENKGRLADILLPPEAAVGHLPRITLDDESITRLVNGLEIRLEMTGQPEAMAVYSAENRFAAVIRPETDGSWHPAKVFLSPCPKKNAD.

Asp38 (nucleophile) is an active-site residue.

This sequence belongs to the pseudouridine synthase TruB family. Type 1 subfamily.

The enzyme catalyses uridine(55) in tRNA = pseudouridine(55) in tRNA. In terms of biological role, responsible for synthesis of pseudouridine from uracil-55 in the psi GC loop of transfer RNAs. This Dehalococcoides mccartyi (strain ATCC BAA-2266 / KCTC 15142 / 195) (Dehalococcoides ethenogenes (strain 195)) protein is tRNA pseudouridine synthase B.